Reading from the N-terminus, the 227-residue chain is Cytidylate kinase (227 aa).

10 to 18 contacts ATP; that stretch reads GPASSGKST.

It belongs to the cytidylate kinase family. Type 1 subfamily.

It is found in the cytoplasm. It carries out the reaction CMP + ATP = CDP + ADP. The enzyme catalyses dCMP + ATP = dCDP + ADP. This is Cytidylate kinase from Streptococcus agalactiae serotype III (strain NEM316).